The primary structure comprises 84 residues: Conotoxin Am6.1 (84 aa).

The N-terminal stretch at 1 to 19 (MEKLTILLLVAAVLMSTHA) is a signal peptide. The propeptide occupies 20-47 (MFQGGGEKSRKAINFSETRKLARNKQKR). Disulfide bonds link cysteine 48/cysteine 62, cysteine 55/cysteine 66, and cysteine 61/cysteine 71. The residue at position 51 (tryptophan 51) is a 6'-bromotryptophan; in Am6.1b. Glutamate 60 and glutamate 64 each carry 4-carboxyglutamate; partial; in Am6.1b and Am6.1c. Residues 78–84 (RTTSHPI) constitute a propeptide that is removed on maturation.

This sequence belongs to the conotoxin O2 family. In terms of processing, three forms of this peptides have been described. The unmodified Am6.1a (Am3286) is not detected in the venom; Am6.1b (Am3408) is only Trp brominated, while Am6.1c (Am3452) is both Trp brominated and Glu gamma-carboxyglutamated. Both Am6.1b and Am6.1c are detected in the venom. As to expression, expressed by the venom duct.

Its subcellular location is the secreted. Its function is as follows. Gamma-conotoxins may act on voltage-gated non-specific cation pacemaker channels (HCN). The sequence is that of Conotoxin Am6.1 from Conus amadis (Amadis cone).